The primary structure comprises 647 residues: Macrolide export ATP-binding/permease protein MacB (647 aa).

Residues 7-245 (IRLEDICKTF…EATLQPHEEI (239 aa)) form the ABC transporter domain. 43–50 (GASGSGKS) serves as a coordination point for ATP. Transmembrane regions (helical) follow at residues 274–294 (VLTLLGIIIGVSSVVTMLAIG), 529–549 (VAAISLLVGGIGVMNIMLVSV), 573–593 (FIIEALSVSAIGGAIGVILGL), and 610–630 (FGPVLLAFACAFATGLIFGFL).

The protein belongs to the ABC transporter superfamily. Macrolide exporter (TC 3.A.1.122) family. Homodimer.

The protein localises to the cell inner membrane. Its function is as follows. Non-canonical ABC transporter that contains transmembrane domains (TMD), which form a pore in the inner membrane, and an ATP-binding domain (NBD), which is responsible for energy generation. Confers resistance against macrolides. The chain is Macrolide export ATP-binding/permease protein MacB from Brucella melitensis biotype 1 (strain ATCC 23456 / CCUG 17765 / NCTC 10094 / 16M).